A 668-amino-acid polypeptide reads, in one-letter code: SHC SH2 domain-binding protein 1 (668 aa).

Ala-2 carries the post-translational modification N-acetylalanine. Residues Ser-31, Ser-44, and Ser-273 each carry the phosphoserine modification. PbH1 repeat units follow at residues 428-451 (GMDV…LIIH), 452-473 (HGKT…TVRT), 474-496 (SAEL…EIYP), 497-518 (GSKC…LIKD), and 526-548 (IPKI…VLVK). Ser-630 is modified (phosphoserine).

In terms of assembly, interacts directly with isoform p52shc of SHC1 via its SH2 domain. Interacts with TRIM71; leading to enhanced SHCBP1 protein stability. Interacts with both members of the centralspindlin complex, KIF23 and RACGAP1. As to expression, expressed in spleen, lung and heart with higher expression in testis. No expression in brain, liver and skeletal muscle. Elevated expression in actively cycling cells.

The protein resides in the midbody. It localises to the cytoplasm. Its subcellular location is the cytoskeleton. It is found in the spindle. Its function is as follows. May play a role in signaling pathways governing cellular proliferation, cell growth and differentiation. May be a component of a novel signaling pathway downstream of Shc. Acts as a positive regulator of FGF signaling in neural progenitor cells. This chain is SHC SH2 domain-binding protein 1 (Shcbp1), found in Mus musculus (Mouse).